Consider the following 525-residue polypeptide: NAD(P)H-quinone oxidoreductase chain 4 1 (525 aa).

Transmembrane regions (helical) follow at residues 6-26 (FPWL…IPII), 36-56 (WYAL…FYTS), 91-111 (LIIL…PVTL), 115-135 (LFYF…AVQD), 136-156 (LLLF…LLAI), 169-189 (FILY…TMAF), 212-232 (LLLY…IPLH), 243-263 (TAPA…YALI), 277-297 (FAPV…LTSF), 314-334 (MGFV…GAVL), 335-355 (QMVS…ATYD), 375-397 (IFAM…GFVA), 417-437 (VIVV…LLSM), and 464-484 (VFVI…PKLL).

Belongs to the complex I subunit 4 family.

Its subcellular location is the cellular thylakoid membrane. The catalysed reaction is a plastoquinone + NADH + (n+1) H(+)(in) = a plastoquinol + NAD(+) + n H(+)(out). It carries out the reaction a plastoquinone + NADPH + (n+1) H(+)(in) = a plastoquinol + NADP(+) + n H(+)(out). Functionally, NDH-1 shuttles electrons from NAD(P)H, via FMN and iron-sulfur (Fe-S) centers, to quinones in the respiratory chain. The immediate electron acceptor for the enzyme in this species is believed to be plastoquinone. Couples the redox reaction to proton translocation (for every two electrons transferred, four hydrogen ions are translocated across the cytoplasmic membrane), and thus conserves the redox energy in a proton gradient. The sequence is that of NAD(P)H-quinone oxidoreductase chain 4 1 from Trichormus variabilis (strain ATCC 29413 / PCC 7937) (Anabaena variabilis).